We begin with the raw amino-acid sequence, 551 residues long: MGEINRRNFLKASMLGAAAAAVASASVVKGVVSPLVADAADIVAPITETSEFPYKVDAKYQRYNSLKNFFEKTFDPEENKTPIKFHYDDVSKITGKKDTGKDLPMLNAERLGIKGRPATHTETSILFHTQHLGAMLTQRHNETGWTGLDEALNAGAWAVEFDYSGFNAAGGGPGSAIPLYPINPMTNEIANEPVMVPGLYNWDNIDVESVRQQGQQWKFESKEEASKILKKATRLLGADLVGIAPYDERWTYSTWGRKIQKPCKMPNGRTKYLPWDLPKMLSGGGVEVFGHAKFEPDWEKYAGFKPKSVIVFVLEEDYEAIRTSPSVISSATVGKSYSNMAEVAYKIAVFLRKLGYYAAPCGNDTGISVPMAVQAGLGEAGRNGLLITQKFGPRHRIAKVYTDLELAPDKPRKFGVREFCRLCKKCADACPAQAISHEKDPKVLQPEDCEASENPYTEKWHVDSERCGSFWAYNGSPCSNCVAVCSWNKVETWNHDVARVATQIPLLQDAARKFDEWFGYSGPVNPDERLESGYVQNMVKDFWNNPESIKQ.

Positions 1-39 form a signal peptide, tat-type signal; that stretch reads MGEINRRNFLKASMLGAAAAAVASASVVKGVVSPLVADA. The region spanning 411–440 is the 4Fe-4S ferredoxin-type 1 domain; sequence PRKFGVREFCRLCKKCADACPAQAISHEKD. Positions 420, 423, 426, 430, 467, 478, 481, and 485 each coordinate [4Fe-4S] cluster. Residues 478–496 form the 4Fe-4S ferredoxin-type 2 domain; sequence CSNCVAVCSWNKVETWNHD.

This sequence belongs to the PceA family. [4Fe-4S] cluster is required as a cofactor. It depends on corrinoid as a cofactor. Predicted to be exported by the Tat system. The position of the signal peptide cleavage has been experimentally proven.

The protein localises to the cell membrane. The enzyme catalyses trichloroethene + chloride + A + H(+) = tetrachloroethene + AH2. It catalyses the reaction trichloroethene + AH2 = (Z)-1,2-dichloroethene + chloride + A + H(+). In terms of biological role, catalyzes the reductive dechlorination of tetrachloroethene (PCE) to trichloroethene (TCE) and of trichloroethene to cis-1,2-dichloroethene (DCE). Reduced methyl viologen can act as the artificial electron donor. The sequence is that of Tetrachloroethene reductive dehalogenase from Desulfitobacterium hafniense (Desulfitobacterium frappieri).